Consider the following 608-residue polypeptide: NADH-quinone oxidoreductase subunit C/D (608 aa).

Residues 1–199 (MSAASSLAPQ…EPFHLSTEKE (199 aa)) form an NADH dehydrogenase I subunit C region. The interval 223 to 608 (DFMFLNLGPN…IDFVMADVDR (386 aa)) is NADH dehydrogenase I subunit D.

It in the N-terminal section; belongs to the complex I 30 kDa subunit family. This sequence in the C-terminal section; belongs to the complex I 49 kDa subunit family. NDH-1 is composed of 13 different subunits. Subunits NuoB, CD, E, F, and G constitute the peripheral sector of the complex.

The protein resides in the cell inner membrane. It carries out the reaction a quinone + NADH + 5 H(+)(in) = a quinol + NAD(+) + 4 H(+)(out). In terms of biological role, NDH-1 shuttles electrons from NADH, via FMN and iron-sulfur (Fe-S) centers, to quinones in the respiratory chain. The immediate electron acceptor for the enzyme in this species is believed to be ubiquinone. Couples the redox reaction to proton translocation (for every two electrons transferred, four hydrogen ions are translocated across the cytoplasmic membrane), and thus conserves the redox energy in a proton gradient. The sequence is that of NADH-quinone oxidoreductase subunit C/D from Nitrosospira multiformis (strain ATCC 25196 / NCIMB 11849 / C 71).